We begin with the raw amino-acid sequence, 378 residues long: Outer membrane protein (378 aa).

The first 22 residues, 1–22 (MRLRTALLATTLMAAAPVAANA), serve as a signal peptide directing secretion. The OmpA-like domain occupies 258-378 (PPAPTPARTY…QNRRVEIILH (121 aa)).

The protein resides in the cell outer membrane. In terms of biological role, growth enhancer. The protein is Outer membrane protein of Gluconacetobacter diazotrophicus (strain ATCC 49037 / DSM 5601 / CCUG 37298 / CIP 103539 / LMG 7603 / PAl5).